Reading from the N-terminus, the 198-residue chain is FMN-dependent NADH:quinone oxidoreductase (198 aa).

FMN is bound at residue Ser10.

The protein belongs to the azoreductase type 1 family. As to quaternary structure, homodimer. Requires FMN as cofactor.

The catalysed reaction is 2 a quinone + NADH + H(+) = 2 a 1,4-benzosemiquinone + NAD(+). The enzyme catalyses N,N-dimethyl-1,4-phenylenediamine + anthranilate + 2 NAD(+) = 2-(4-dimethylaminophenyl)diazenylbenzoate + 2 NADH + 2 H(+). Its function is as follows. Quinone reductase that provides resistance to thiol-specific stress caused by electrophilic quinones. In terms of biological role, also exhibits azoreductase activity. Catalyzes the reductive cleavage of the azo bond in aromatic azo compounds to the corresponding amines. The sequence is that of FMN-dependent NADH:quinone oxidoreductase from Paraburkholderia phymatum (strain DSM 17167 / CIP 108236 / LMG 21445 / STM815) (Burkholderia phymatum).